A 437-amino-acid polypeptide reads, in one-letter code: Serine hydroxymethyltransferase (437 aa).

(6S)-5,6,7,8-tetrahydrofolate is bound by residues Leu-130 and 134-136 (GHL). An N6-(pyridoxal phosphate)lysine modification is found at Lys-239.

The protein belongs to the SHMT family. In terms of assembly, homodimer. Requires pyridoxal 5'-phosphate as cofactor.

It localises to the cytoplasm. It catalyses the reaction (6R)-5,10-methylene-5,6,7,8-tetrahydrofolate + glycine + H2O = (6S)-5,6,7,8-tetrahydrofolate + L-serine. It functions in the pathway one-carbon metabolism; tetrahydrofolate interconversion. It participates in amino-acid biosynthesis; glycine biosynthesis; glycine from L-serine: step 1/1. Catalyzes the reversible interconversion of serine and glycine with tetrahydrofolate (THF) serving as the one-carbon carrier. This reaction serves as the major source of one-carbon groups required for the biosynthesis of purines, thymidylate, methionine, and other important biomolecules. Also exhibits THF-independent aldolase activity toward beta-hydroxyamino acids, producing glycine and aldehydes, via a retro-aldol mechanism. The polypeptide is Serine hydroxymethyltransferase (Bartonella quintana (strain Toulouse) (Rochalimaea quintana)).